A 1168-amino-acid polypeptide reads, in one-letter code: Zinc finger CCHC domain-containing protein 2 (1168 aa).

4 disordered regions span residues 1-87 (MLRM…GGHA), 209-242 (EGSR…CAKL), 561-693 (KRSL…LGTE), and 932-978 (ATSA…SDST). Residues 43–66 (PPPPPPTGLPRGPPPPPPSPPRGL) are compositionally biased toward pro residues. Over residues 67-78 (EPPVASGPTAGA) the composition is skewed to low complexity. The segment covering 216–227 (EDEPGGDDEQDA) has biased composition (acidic residues). Residues 233 to 242 (GPEGGGCAKL) show a composition bias toward gly residues. Positions 574–588 (PQVEKEKIKKTENRL) are enriched in basic and acidic residues. A compositionally biased stretch (low complexity) spans 626-635 (SSESYSSPSS). The span at 636-655 (PRHDGRESLESEEEKDRDTD) shows a compositional bias: basic and acidic residues. Residues 932 to 949 (ATSAQPASTGISPAQSTV) are compositionally biased toward polar residues. A compositionally biased stretch (pro residues) spans 951–965 (PAVPTHTPGPAPSPS). The segment covering 966 to 978 (PALTHSTAQSDST) has biased composition (polar residues). The CCHC-type zinc finger occupies 1121–1138 (VSCYNCGVSGHYAQDCKQ).

This Rattus norvegicus (Rat) protein is Zinc finger CCHC domain-containing protein 2 (Zcchc2).